A 397-amino-acid chain; its full sequence is Cercosporin biosynthesis regulatory protein CTB8 (397 aa).

Residues 26–53 (CTHCSSQKIRCTKERPACARCVNKGLLC) constitute a DNA-binding region (zn(2)-C6 fungal-type). Disordered stretches follow at residues 63–90 (TRRHSVRATPEPETTISNAPTSSVAPDS) and 173–198 (AEASTRPSSSSSPPSQRSDGGRATTH). Over residues 74-87 (PETTISNAPTSSVA) the composition is skewed to polar residues. Residues 179 to 197 (PSSSSSPPSQRSDGGRATT) show a composition bias toward low complexity.

It localises to the nucleus. In terms of biological role, transcription regulator of the gene cluster that mediates the biosynthesis of cercosporin, a light-activated, non-host-selective toxin. The perylenequinone chromophore of cercosporin absorbs light energy to attain an electronically-activated triplet state and produces active oxygen species such as the hydroxyl radical, superoxide, hydrogen peroxide or singlet oxygen upon reaction with oxygen molecules. These reactive oxygen species cause damage to various cellular components including lipids, proteins and nucleic acids. The chain is Cercosporin biosynthesis regulatory protein CTB8 from Cercospora beticola (Sugarbeet leaf spot fungus).